Here is a 114-residue protein sequence, read N- to C-terminus: T cell receptor alpha variable 3 (114 aa).

A signal peptide spans Met1 to Ala20. Residues Gln21–Asp114 enclose the Ig-like domain. Cys42 and Cys110 are oxidised to a cystine. Asn87 carries an N-linked (GlcNAc...) asparagine glycan.

Alpha-beta TR is a heterodimer composed of an alpha and beta chain; disulfide-linked. The alpha-beta TR is associated with the transmembrane signaling CD3 coreceptor proteins to form the TR-CD3 (TcR or TCR). The assembly of alpha-beta TR heterodimers with CD3 occurs in the endoplasmic reticulum where a single alpha-beta TR heterodimer associates with one CD3D-CD3E heterodimer, one CD3G-CD3E heterodimer and one CD247 homodimer forming a stable octameric structure. CD3D-CD3E and CD3G-CD3E heterodimers preferentially associate with TR alpha and TR beta chains, respectively. The association of the CD247 homodimer is the last step of TcR assembly in the endoplasmic reticulum and is required for transport to the cell surface.

It is found in the cell membrane. Its function is as follows. V region of the variable domain of T cell receptor (TR) alpha chain that participates in the antigen recognition. Alpha-beta T cell receptors are antigen specific receptors which are essential to the immune response and are present on the cell surface of T lymphocytes. Recognize peptide-major histocompatibility (MH) (pMH) complexes that are displayed by antigen presenting cells (APC), a prerequisite for efficient T cell adaptive immunity against pathogens. Binding of alpha-beta TR to pMH complex initiates TR-CD3 clustering on the cell surface and intracellular activation of LCK that phosphorylates the ITAM motifs of CD3G, CD3D, CD3E and CD247 enabling the recruitment of ZAP70. In turn ZAP70 phosphorylates LAT, which recruits numerous signaling molecules to form the LAT signalosome. The LAT signalosome propagates signal branching to three major signaling pathways, the calcium, the mitogen-activated protein kinase (MAPK) kinase and the nuclear factor NF-kappa-B (NF-kB) pathways, leading to the mobilization of transcription factors that are critical for gene expression and essential for T cell growth and differentiation. The T cell repertoire is generated in the thymus, by V-(D)-J rearrangement. This repertoire is then shaped by intrathymic selection events to generate a peripheral T cell pool of self-MH restricted, non-autoaggressive T cells. Post-thymic interaction of alpha-beta TR with the pMH complexes shapes TR structural and functional avidity. The polypeptide is T cell receptor alpha variable 3 (Homo sapiens (Human)).